The chain runs to 101 residues: Large ribosomal subunit protein eL21 (101 aa).

Basic residues predominate over residues 1–18 (MVKHSKGYRTRSRSLLRK). The tract at residues 1-24 (MVKHSKGYRTRSRSLLRKSPRERG) is disordered.

Belongs to the eukaryotic ribosomal protein eL21 family.

The chain is Large ribosomal subunit protein eL21 (rpl21e) from Saccharolobus solfataricus (strain ATCC 35092 / DSM 1617 / JCM 11322 / P2) (Sulfolobus solfataricus).